The sequence spans 836 residues: Sucrose synthase 5 (836 aa).

The interval 270 to 748 (RIFNVVIFSV…GLQRINECYT (479 aa)) is GT-B glycosyltransferase. The interval 805 to 836 (PPPLPPKPLVKPSASKGSKRTQPRLSFRLFGA) is disordered.

This sequence belongs to the glycosyltransferase 1 family. Plant sucrose synthase subfamily. As to expression, detected in the whole plant but more precisely confined to the vasculature in cotyledons, leaves, petals, anthers and roots. Also detected in developing siliques, young immature rosette and cauline leaves.

Its subcellular location is the secreted. The protein resides in the cell wall. The catalysed reaction is an NDP-alpha-D-glucose + D-fructose = a ribonucleoside 5'-diphosphate + sucrose + H(+). In terms of biological role, sucrose-cleaving enzyme that provides UDP-glucose and fructose for various metabolic pathways. Functions in callose synthesis at the site of phloem sieve elements. The sequence is that of Sucrose synthase 5 (SUS5) from Arabidopsis thaliana (Mouse-ear cress).